The primary structure comprises 414 residues: Tryptophan synthase beta chain (414 aa).

Residue Lys108 is modified to N6-(pyridoxal phosphate)lysine.

This sequence belongs to the TrpB family. Tetramer of two alpha and two beta chains. The cofactor is pyridoxal 5'-phosphate.

The catalysed reaction is (1S,2R)-1-C-(indol-3-yl)glycerol 3-phosphate + L-serine = D-glyceraldehyde 3-phosphate + L-tryptophan + H2O. It participates in amino-acid biosynthesis; L-tryptophan biosynthesis; L-tryptophan from chorismate: step 5/5. Functionally, the beta subunit is responsible for the synthesis of L-tryptophan from indole and L-serine. This chain is Tryptophan synthase beta chain, found in Beijerinckia indica subsp. indica (strain ATCC 9039 / DSM 1715 / NCIMB 8712).